Here is a 42-residue protein sequence, read N- to C-terminus: Photosystem II reaction center protein J (42 aa).

Residues 10 to 30 traverse the membrane as a helical segment; sequence IPLWLVGTVAGILVLGLVGLF.

This sequence belongs to the PsbJ family. PSII is composed of 1 copy each of membrane proteins PsbA, PsbB, PsbC, PsbD, PsbE, PsbF, PsbH, PsbI, PsbJ, PsbK, PsbL, PsbM, PsbT, PsbX, PsbY, PsbZ, Psb30/Ycf12, at least 3 peripheral proteins of the oxygen-evolving complex and a large number of cofactors. It forms dimeric complexes.

Its subcellular location is the plastid. The protein resides in the chloroplast thylakoid membrane. One of the components of the core complex of photosystem II (PSII). PSII is a light-driven water:plastoquinone oxidoreductase that uses light energy to abstract electrons from H(2)O, generating O(2) and a proton gradient subsequently used for ATP formation. It consists of a core antenna complex that captures photons, and an electron transfer chain that converts photonic excitation into a charge separation. The sequence is that of Photosystem II reaction center protein J from Staurastrum punctulatum (Green alga).